The following is a 434-amino-acid chain: ATP-dependent protease ATPase subunit HslU (434 aa).

ATP is bound by residues Val18, 60–65 (GVGKTE), Asp247, Glu312, and Arg384.

Belongs to the ClpX chaperone family. HslU subfamily. In terms of assembly, a double ring-shaped homohexamer of HslV is capped on each side by a ring-shaped HslU homohexamer. The assembly of the HslU/HslV complex is dependent on binding of ATP.

The protein localises to the cytoplasm. ATPase subunit of a proteasome-like degradation complex; this subunit has chaperone activity. The binding of ATP and its subsequent hydrolysis by HslU are essential for unfolding of protein substrates subsequently hydrolyzed by HslV. HslU recognizes the N-terminal part of its protein substrates and unfolds these before they are guided to HslV for hydrolysis. The protein is ATP-dependent protease ATPase subunit HslU of Rhodopseudomonas palustris (strain BisB18).